Reading from the N-terminus, the 891-residue chain is Transportin-1 (891 aa).

HEAT repeat units follow at residues 14-40 (GLRE…QQLQ), 45-83 (FPDF…ATFS), 92-125 (YVKS…IVRV), 131-168 (LFQA…LDVD), 178-208 (NVFM…QYIV), 221-248 (YLQG…VQLI), 260-287 (KNVT…FWSA), 303-381 (PRLI…LSNV), 389-420 (TLMP…GAIA), 432-459 (PQIV…TLSR), 477-510 (FDKI…EEEA), 518-551 (LGII…ADAV), 559-597 (KYLD…QALG), 605-653 (EPVF…GLGA), 664-695 (LRDI…RVCP), 703-740 (QEFL…IKIG), 748-784 (ITVV…WVCP), 792-825 (DHFM…VAAN), and 834-866 (TFIC…KQML). Residues 35–103 (IWQQLQHYSQ…KSELLPCIGA (69 aa)) enclose the Importin N-terminal domain. Residues 317–330 (DDDESLADAEEDES) show a composition bias toward acidic residues. Residues 317–337 (DDDESLADAEEDESFPDRDQD) are disordered.

The protein belongs to the importin beta family. Importin beta-2 subfamily.

It localises to the cytoplasm. Its subcellular location is the nucleus. It is found in the nucleoplasm. In terms of biological role, functions in nuclear protein import as nuclear transport receptor. Serves as receptor for nuclear localization signals (NLS) in cargo substrates. Is thought to mediate docking of the importin/substrate complex to the nuclear pore complex (NPC) through binding to nucleoporin and the complex is subsequently translocated through the pore by an energy requiring, Ran-dependent mechanism. At the nucleoplasmic side of the NPC, Ran binds to the importin, the importin/substrate complex dissociates and importin is re-exported from the nucleus to the cytoplasm where GTP hydrolysis releases Ran. The directionality of nuclear import is thought to be conferred by an asymmetric distribution of the GTP- and GDP-bound forms of Ran between the cytoplasm and nucleus. This chain is Transportin-1 (TRN1), found in Oryza sativa subsp. japonica (Rice).